Consider the following 378-residue polypeptide: MQSTIKPVEYDRPVAAGTVCGVGQAWAKVPDAPSAEERAALKERIKALLVREKAVLVAHYYVDAELQELADETGGCVADSLEMARFGRDHDAQTLIVAGVRFMGETAKILSPNKRILMPDLDATCSLDLGCPVDEFSAFCDAHPDRTVVVYANTSAAVKARADWMVTSSIGLEIVADLHARGEKIIWAPDRHLGSYIQKKTGADMLLWQGSCLVHDEFKGIELDLLRAEYPDAKVLVHPESPENVVAQADVVGSTTQLIDAAVKFNATHFIVATDLGILHKMQLAAPGKTFIAAPTAGNSATCKSCAHCPWMAMNGLANLADVLERGHNEIFVDPAIGERARLPIDRMLDFAAAHKKRVQASGDLQRDQQLFANVGAA.

Residues H59 and S80 each contribute to the iminosuccinate site. C125 contacts [4Fe-4S] cluster. Iminosuccinate-binding positions include Y151–N153 and S168. A [4Fe-4S] cluster-binding site is contributed by C212. Iminosuccinate-binding positions include H238–E240 and T255. C309 contacts [4Fe-4S] cluster.

It belongs to the quinolinate synthase family. Type 1 subfamily. [4Fe-4S] cluster serves as cofactor.

The protein resides in the cytoplasm. It catalyses the reaction iminosuccinate + dihydroxyacetone phosphate = quinolinate + phosphate + 2 H2O + H(+). It functions in the pathway cofactor biosynthesis; NAD(+) biosynthesis; quinolinate from iminoaspartate: step 1/1. Functionally, catalyzes the condensation of iminoaspartate with dihydroxyacetone phosphate to form quinolinate. This is Quinolinate synthase from Burkholderia lata (strain ATCC 17760 / DSM 23089 / LMG 22485 / NCIMB 9086 / R18194 / 383).